The primary structure comprises 138 residues: MLSPRKVKYRKKQRGRLSGEAQKGNEISFGEYGLVSLETYFITARQIEAARVAMTRRVKRGGKVWIRIFPDVPYTKKPAETRMGKGKGGVDHWNAPVKLGTVMFEMAGVPRELAEAAMMLASSKLPVKTTFVVRRDLR.

Basic residues predominate over residues 1 to 15 (MLSPRKVKYRKKQRG). The tract at residues 1–20 (MLSPRKVKYRKKQRGRLSGE) is disordered.

The protein belongs to the universal ribosomal protein uL16 family. As to quaternary structure, part of the 50S ribosomal subunit.

Functionally, binds 23S rRNA and is also seen to make contacts with the A and possibly P site tRNAs. This chain is Large ribosomal subunit protein uL16, found in Borrelia turicatae (strain 91E135).